The primary structure comprises 126 residues: Actin-depolymerizing factor (126 aa).

The ADF-H domain occupies 1 to 126; sequence EDNCKLKFLE…SFDIIKSRAL (126 aa).

This sequence belongs to the actin-binding proteins ADF family. Preferentially in mature anther.

Functionally, actin-depolymerizing protein. Severs actin filaments (F-actin) and binds to actin monomers. The protein is Actin-depolymerizing factor of Brassica napus (Rape).